Here is a 282-residue protein sequence, read N- to C-terminus: Large ribosomal subunit protein uL2 (282 aa).

Disordered stretches follow at residues 31 to 56 (EKSL…RHRG) and 226 to 282 (SVMN…GSKM). Positions 35–44 (LDSQSHSAGR) are enriched in polar residues. A compositionally biased stretch (basic residues) spans 257–266 (TVGKKTRSKK).

It belongs to the universal ribosomal protein uL2 family. As to quaternary structure, part of the 50S ribosomal subunit. Forms a bridge to the 30S subunit in the 70S ribosome.

Its function is as follows. One of the primary rRNA binding proteins. Required for association of the 30S and 50S subunits to form the 70S ribosome, for tRNA binding and peptide bond formation. It has been suggested to have peptidyltransferase activity; this is somewhat controversial. Makes several contacts with the 16S rRNA in the 70S ribosome. The chain is Large ribosomal subunit protein uL2 from Levilactobacillus brevis (strain ATCC 367 / BCRC 12310 / CIP 105137 / JCM 1170 / LMG 11437 / NCIMB 947 / NCTC 947) (Lactobacillus brevis).